The following is a 513-amino-acid chain: ATP synthase subunit alpha (513 aa).

An ATP-binding site is contributed by 171 to 178; it reads GDRQIGKT.

This sequence belongs to the ATPase alpha/beta chains family. In terms of assembly, F-type ATPases have 2 components, CF(1) - the catalytic core - and CF(0) - the membrane proton channel. CF(1) has five subunits: alpha(3), beta(3), gamma(1), delta(1), epsilon(1). CF(0) has three main subunits: a(1), b(2) and c(9-12). The alpha and beta chains form an alternating ring which encloses part of the gamma chain. CF(1) is attached to CF(0) by a central stalk formed by the gamma and epsilon chains, while a peripheral stalk is formed by the delta and b chains.

The protein localises to the cell inner membrane. It catalyses the reaction ATP + H2O + 4 H(+)(in) = ADP + phosphate + 5 H(+)(out). In terms of biological role, produces ATP from ADP in the presence of a proton gradient across the membrane. The alpha chain is a regulatory subunit. This chain is ATP synthase subunit alpha, found in Wolbachia sp. subsp. Drosophila simulans (strain wRi).